The following is a 321-amino-acid chain: Lipoyl synthase (321 aa).

Positions 68, 73, 79, 94, 98, 101, and 308 each coordinate [4Fe-4S] cluster. Positions 80–297 (FNHGTATFMI…KAEALAMGFT (218 aa)) constitute a Radical SAM core domain.

Belongs to the radical SAM superfamily. Lipoyl synthase family. Requires [4Fe-4S] cluster as cofactor.

The protein localises to the cytoplasm. The enzyme catalyses [[Fe-S] cluster scaffold protein carrying a second [4Fe-4S](2+) cluster] + N(6)-octanoyl-L-lysyl-[protein] + 2 oxidized [2Fe-2S]-[ferredoxin] + 2 S-adenosyl-L-methionine + 4 H(+) = [[Fe-S] cluster scaffold protein] + N(6)-[(R)-dihydrolipoyl]-L-lysyl-[protein] + 4 Fe(3+) + 2 hydrogen sulfide + 2 5'-deoxyadenosine + 2 L-methionine + 2 reduced [2Fe-2S]-[ferredoxin]. The protein operates within protein modification; protein lipoylation via endogenous pathway; protein N(6)-(lipoyl)lysine from octanoyl-[acyl-carrier-protein]: step 2/2. In terms of biological role, catalyzes the radical-mediated insertion of two sulfur atoms into the C-6 and C-8 positions of the octanoyl moiety bound to the lipoyl domains of lipoate-dependent enzymes, thereby converting the octanoylated domains into lipoylated derivatives. In Escherichia fergusonii (strain ATCC 35469 / DSM 13698 / CCUG 18766 / IAM 14443 / JCM 21226 / LMG 7866 / NBRC 102419 / NCTC 12128 / CDC 0568-73), this protein is Lipoyl synthase.